A 424-amino-acid chain; its full sequence is Gamma-glutamyl phosphate reductase (424 aa).

It belongs to the gamma-glutamyl phosphate reductase family.

The protein localises to the cytoplasm. It catalyses the reaction L-glutamate 5-semialdehyde + phosphate + NADP(+) = L-glutamyl 5-phosphate + NADPH + H(+). It participates in amino-acid biosynthesis; L-proline biosynthesis; L-glutamate 5-semialdehyde from L-glutamate: step 2/2. Catalyzes the NADPH-dependent reduction of L-glutamate 5-phosphate into L-glutamate 5-semialdehyde and phosphate. The product spontaneously undergoes cyclization to form 1-pyrroline-5-carboxylate. The protein is Gamma-glutamyl phosphate reductase of Halorhodospira halophila (strain DSM 244 / SL1) (Ectothiorhodospira halophila (strain DSM 244 / SL1)).